The sequence spans 109 residues: Class I hydrophobin 18 (109 aa).

The N-terminal stretch at 1-20 (MFTEQVLNVIILLQTATVTA) is a signal peptide. 4 disulfides stabilise this stretch: Cys-28–Cys-88, Cys-35–Cys-82, Cys-36–Cys-69, and Cys-89–Cys-102. N-linked (GlcNAc...) asparagine glycans are attached at residues Asn-91 and Asn-106.

The protein belongs to the fungal hydrophobin family. In terms of assembly, self-assembles to form functional amyloid fibrils called rodlets. Self-assembly into fibrillar rodlets occurs spontaneously at hydrophobic:hydrophilic interfaces and the rodlets further associate laterally to form amphipathic monolayers.

The protein localises to the secreted. Its subcellular location is the cell wall. Its function is as follows. Aerial growth, conidiation, and dispersal of filamentous fungi in the environment rely upon a capability of their secreting small amphipathic proteins called hydrophobins (HPBs) with low sequence identity. Class I can self-assemble into an outermost layer of rodlet bundles on aerial cell surfaces, conferring cellular hydrophobicity that supports fungal growth, development and dispersal; whereas Class II form highly ordered films at water-air interfaces through intermolecular interactions but contribute nothing to the rodlet structure. The polypeptide is Class I hydrophobin 18 (Pleurotus ostreatus (strain PC15) (Oyster mushroom)).